We begin with the raw amino-acid sequence, 100 residues long: UPF0125 protein HD_1828 (100 aa).

It belongs to the UPF0125 (RnfH) family.

The sequence is that of UPF0125 protein HD_1828 from Haemophilus ducreyi (strain 35000HP / ATCC 700724).